The sequence spans 381 residues: MALNIRKTHPLLKIVNQTLIDLPAPSNISVWWNFGSLLGLCLIIQIVTGLFLAMHYTADISLAFSSVVHICRDVNYGWLIRNIHANGASLFFVCIYFHIARGLYYGSYLYKETWNIGVILLFLLMATAFVGYVLPWGQMSFWGATVITNLLSAFPYVGDVLVQWIWGGFSVDNATLTRFFAFHFLLPFLITALMIIHVLFLHETGSNNPMGLNSDMDKISFHPYFSYKDALGFLTLLILLGVLALFLPNLLGEAENFIPANPLVTPPHIKPEWYFLFAYAILRSIPNKLGGVLALLFSILILMLVPFLHTSKQRSSTFRPLTQIFFWTLVTNMLILTWIGGQPVEQPFILIGQIASISYFSLFLIALPLAGWWENKILNLN.

4 helical membrane passes run phenylalanine 34–methionine 54, tryptophan 78–isoleucine 99, tryptophan 114–leucine 134, and phenylalanine 179–leucine 199. 2 residues coordinate heme b: histidine 84 and histidine 98. Residues histidine 183 and histidine 197 each contribute to the heme b site. Histidine 202 serves as a coordination point for a ubiquinone. 4 helical membrane passes run tyrosine 227–leucine 247, leucine 289–histidine 309, leucine 321–glycine 341, and phenylalanine 348–proline 368.

The protein belongs to the cytochrome b family. As to quaternary structure, the cytochrome bc1 complex contains 3 respiratory subunits (MT-CYB, CYC1 and UQCRFS1), 2 core proteins (UQCRC1 and UQCRC2) and probably 6 low-molecular weight proteins. The cofactor is heme b.

It localises to the mitochondrion inner membrane. Its function is as follows. Component of the ubiquinol-cytochrome c reductase complex (complex III or cytochrome b-c1 complex) that is part of the mitochondrial respiratory chain. The b-c1 complex mediates electron transfer from ubiquinol to cytochrome c. Contributes to the generation of a proton gradient across the mitochondrial membrane that is then used for ATP synthesis. The protein is Cytochrome b (mt-cyb) of Isurus oxyrinchus (Shortfin mako shark).